A 704-amino-acid chain; its full sequence is MATCPPFDFSTKYYDGDGGCQRQSSFFGGTTVLDQGVGYAVILGFGAFFAVFTSFLVWLEKRYVGARHTSEWFNTAGRNVKTGLIASVIVSQWTWAATILQSSNVAWQYGVSGPFWYASGATIQVLLFGVMAIEIKRKAPNAHTVCEIVKARWGTATHIVFLVFCLATNVVVTAMLLLGGSAVVNALTGVNLYAASFLIPLGVVVYTLAGGLKATFLASYVHSVIVHVALVVFVFLVYTSSKELGSPSVVYDRLKDMVAKSRSCTEPLSHHGQACGPVDGNFRGSYLTMLSSGGAVFGLINIVGNFGTVFVDNGYWVSAIAARPSSTHKGYLLGGLVWFAVPFSLATSLGLGALALDLPISKDEADRGLVPPATAIALMGKSGSLLLLTMLFMAVTSAGSSELIAVSSLFTYDIYRTYINPRATGRQILKISRCAVLGFGCFMGILAVVLNKAGVSLGWMYLAMGVLIGSAVIPIAFMLLWSKANAFGAILGATSGCVFGIITWLTTAKTQYGRVDLDSTGKNGPMLAGNLVAILTGGLIHAVCSLVRPQNYDWSTTREIKVVEAYASGDEDVDVPAEELREEKLRRAKAWIVKWGLVFTILIVVIWPVLSLPARVFSRGYFWFWAIVAIAWGTIGSIVIIGLPLVESWDTIKSVCMGMFTNDRVMKKLDDLNHRLRALTMAVPEAEKIYLLELEKTKKNDEEG.

15 helical membrane-spanning segments follow: residues 39-59, 80-100, 115-135, 159-179, 192-212, 216-236, 291-311, 336-356, 388-408, 435-455, 461-481, 486-506, 527-547, 590-610, and 622-642; these read YAVILGFGAFFAVFTSFLVWL, VKTGLIASVIVSQWTWAATIL, FWYASGATIQVLLFGVMAIEI, IVFLVFCLATNVVVTAMLLLG, LYAASFLIPLGVVVYTLAGGL, FLASYVHSVIVHVALVVFVFL, SSGGAVFGLINIVGNFGTVFV, LVWFAVPFSLATSLGLGALAL, LTMLFMAVTSAGSSELIAVSS, AVLGFGCFMGILAVVLNKAGV, YLAMGVLIGSAVIPIAFMLLW, AFGAILGATSGCVFGIITWLT, LAGNLVAILTGGLIHAVCSLV, AWIVKWGLVFTILIVVIWPVL, and FWFWAIVAIAWGTIGSIVIIG.

Belongs to the sodium:solute symporter (SSF) (TC 2.A.21) family. In terms of tissue distribution, expressed in root rhizodermis, including root hairs and cortex in more basal root zones. Expressed in shoots.

Its subcellular location is the cell membrane. Its function is as follows. High-affinity urea-proton symporter involved in the active transport of urea across the plasma membrane into root cells. May play an important role in urea uptake by plant cells at low external urea concentrations. This chain is Urea-proton symporter DUR3 (DUR3), found in Arabidopsis thaliana (Mouse-ear cress).